Reading from the N-terminus, the 349-residue chain is Early nodulin-like protein 2 (349 aa).

The signal sequence occupies residues 1-28 (MTFLKMKSLSFFFTILLSLSTLFTISNA). Residues 29–130 (RKFNVGGSGA…GQKLNVVVIS (102 aa)) enclose the Phytocyanin domain. Residues C84 and C118 are joined by a disulfide bond. The segment at 136-330 (TAQSPHAAAP…GQKKSSANGM (195 aa)) is disordered. 2 stretches are compositionally biased toward low complexity: residues 145-201 (PGSS…SPPG) and 224-234 (TSPVSPSSAPM). The segment covering 249–260 (IPPSSAPMTSPP) has biased composition (polar residues). A compositionally biased stretch (low complexity) spans 263 to 312 (MAPKSSSPVSNSPTVSPSLAPGGSTSSSPSDSPSGSAMGPSGDGPSAAGD). A lipid anchor (GPI-anchor amidated serine) is attached at S325. The propeptide at 326–349 (SANGMTVMSITTVLSLVLTIFLSA) is removed in mature form.

This sequence belongs to the early nodulin-like (ENODL) family. As to expression, mostly expressed in leaves and roots, and, to a lower extent, in seedlings, stems and flowers, but barely in seeds.

The protein resides in the cell membrane. Functionally, may act as a carbohydrate transporter. The protein is Early nodulin-like protein 2 of Arabidopsis thaliana (Mouse-ear cress).